Reading from the N-terminus, the 285-residue chain is 3-methyl-2-oxobutanoate hydroxymethyltransferase (285 aa).

The interval 1–23 is disordered; it reads MSEHNVYGAAQPAQPAQPAQPRT. The span at 9–21 shows a compositional bias: low complexity; sequence AAQPAQPAQPAQP. 2 residues coordinate Mg(2+): Asp66 and Asp105. 3-methyl-2-oxobutanoate-binding positions include 66-67, Asp105, and Lys135; that span reads DS. Residue Glu137 participates in Mg(2+) binding. The active-site Proton acceptor is Glu203.

It belongs to the PanB family. In terms of assembly, homodecamer; pentamer of dimers. Mg(2+) serves as cofactor.

It is found in the cytoplasm. It carries out the reaction 3-methyl-2-oxobutanoate + (6R)-5,10-methylene-5,6,7,8-tetrahydrofolate + H2O = 2-dehydropantoate + (6S)-5,6,7,8-tetrahydrofolate. It functions in the pathway cofactor biosynthesis; (R)-pantothenate biosynthesis; (R)-pantoate from 3-methyl-2-oxobutanoate: step 1/2. In terms of biological role, catalyzes the reversible reaction in which hydroxymethyl group from 5,10-methylenetetrahydrofolate is transferred onto alpha-ketoisovalerate to form ketopantoate. This is 3-methyl-2-oxobutanoate hydroxymethyltransferase from Mycobacterium avium (strain 104).